Here is a 727-residue protein sequence, read N- to C-terminus: Endothelin-converting enzyme homolog (727 aa).

The Cytoplasmic segment spans residues 1–44 (MSFNFSRYSGAYTTTFSFLLLALLIVSAVLLSRPYAPALLHAEE). A helical; Signal-anchor for type II membrane protein membrane pass occupies residues 45 to 65 (AYCVSMSCVTAAASVLSLMDA). A Peptidase M13 domain is found at 46–727 (YCVSMSCVTA…MNPVHKCEVW (682 aa)). 5 disulfides stabilise this stretch: Cys47/Cys52, Cys70/Cys712, Cys78/Cys672, Cys134/Cys392, and Cys601/Cys724. Topologically, residues 66–727 (TADPCSDFYQ…MNPVHKCEVW (662 aa)) are extracellular. 9 N-linked (GlcNAc...) asparagine glycosylation sites follow: Asn138, Asn160, Asn164, Asn169, Asn222, Asn309, Asn337, Asn340, and Asn511. His564 is a binding site for Zn(2+). Glu565 is an active-site residue. His568 provides a ligand contact to Zn(2+). Asn589 and Asn608 each carry an N-linked (GlcNAc...) asparagine glycan. Residue Glu624 participates in Zn(2+) binding. Catalysis depends on Asp628, which acts as the Proton donor. An N-linked (GlcNAc...) asparagine glycan is attached at Asn656.

This sequence belongs to the peptidase M13 family. Requires Zn(2+) as cofactor. As to expression, highly expressed in brain and midgut, and to a lesser extent in fat body, ovaries, testes and haemocytes.

The protein localises to the cell membrane. The polypeptide is Endothelin-converting enzyme homolog (Locusta migratoria (Migratory locust)).